Here is a 943-residue protein sequence, read N- to C-terminus: Isoleucine--tRNA ligase (943 aa).

A 'HIGH' region motif is present at residues 59-69 (PYANGQIHLGH). Glu-577 lines the L-isoleucyl-5'-AMP pocket. The short motif at 618–622 (KMSKS) is the 'KMSKS' region element. Lys-621 is a binding site for ATP. Residues Cys-906, Cys-909, Cys-926, and Cys-929 each contribute to the Zn(2+) site.

Belongs to the class-I aminoacyl-tRNA synthetase family. IleS type 1 subfamily. As to quaternary structure, monomer. The cofactor is Zn(2+).

It localises to the cytoplasm. It catalyses the reaction tRNA(Ile) + L-isoleucine + ATP = L-isoleucyl-tRNA(Ile) + AMP + diphosphate. Functionally, catalyzes the attachment of isoleucine to tRNA(Ile). As IleRS can inadvertently accommodate and process structurally similar amino acids such as valine, to avoid such errors it has two additional distinct tRNA(Ile)-dependent editing activities. One activity is designated as 'pretransfer' editing and involves the hydrolysis of activated Val-AMP. The other activity is designated 'posttransfer' editing and involves deacylation of mischarged Val-tRNA(Ile). The chain is Isoleucine--tRNA ligase from Xylella fastidiosa (strain M12).